The following is a 728-amino-acid chain: MHSSSKSQAFSLTFLLFLFLLPSVSESQLISSESRTLLEIQKHLQYPPTLRSWSNWTNFCYLPSSPSFKILCFNGHVTELTVTGNRTVKLPGRFSSDSLFTVLTKLSNLKTLSLVSLGISGPLPSQIIRLSSSLQSLNLSSNFISGNIPKEISSLKNLRSLVLANNLFNGSVPDLRGLSNLQELNLGGNKLGPEVVPSLASNLITISLKNNSFGSKIPEQIKKLNKLQSLDLSSNKFTGSIPRFLLSLPSLQNLSLAQNLLSGSLPNSSLCNSKLRILDVSRNLLTGKLPSCFSSKKQTVLLFTFNCLSINGSPSAKYQRPVTFCENEAKQAVAAVKSDTKDKERKEEDTGIELGLVIGIIIGVILVSAVLAGLVLVRMRKSRSKEEPLEANNVDQVTVCSNTTRSTTSKTVPDLRRVPQTMRSAVIGLSPYRVFSLEELEEATNNFDAENLCGEQLYKGCLREGIAVTVRCIKLKQKNSTQNLAQQMEVLSKLRHMHLVSVLGHCIGTYQDHHPYAGSTIFIVQEYISNGSLRDYLTDWRKKEVLKWPQRMSIAIGVARGIQFLHTGVAPGIFGNNLEIENVLLDETLTVKLSGYSIPLPSKVGAESPSNEDGEKEDVYQFGVILIQIITGKVIAAASSELGSLKLQLENSLRDEPSVLRSLADPCVRGTYAYESLRTTVEFAINCLCEDQRKRPSIEDVVWNLQYTIQVQQGWTSSENLGLGGSEL.

A signal peptide spans 1–27 (MHSSSKSQAFSLTFLLFLFLLPSVSES). Residues 28-356 (QLISSESRTL…EEDTGIELGL (329 aa)) are Extracellular-facing. N-linked (GlcNAc...) asparagine glycosylation is found at N55 and N85. 9 LRR repeats span residues 74–96 (NGHV…RFSS), 106–130 (LSNL…IIRL), 131–155 (SSSL…ISSL), 157–178 (NLRS…LRGL), 179–202 (SNLQ…LASN), 204–224 (ITIS…IKKL), 225–248 (NKLQ…LLSL), 249–272 (PSLQ…SLCN), and 274–295 (KLRI…CFSS). Residues N138 and N169 are each glycosylated (N-linked (GlcNAc...) asparagine). N210 carries N-linked (GlcNAc...) asparagine glycosylation. N253 and N267 each carry an N-linked (GlcNAc...) asparagine glycan. Residues 357 to 377 (VIGIIIGVILVSAVLAGLVLV) form a helical membrane-spanning segment. Topologically, residues 378–728 (RMRKSRSKEE…ENLGLGGSEL (351 aa)) are cytoplasmic. The 289-residue stretch at 421–709 (TMRSAVIGLS…DVVWNLQYTI (289 aa)) folds into the Protein kinase domain.

It belongs to the protein kinase superfamily. Ser/Thr protein kinase family.

It is found in the membrane. It catalyses the reaction L-seryl-[protein] + ATP = O-phospho-L-seryl-[protein] + ADP + H(+). It carries out the reaction L-threonyl-[protein] + ATP = O-phospho-L-threonyl-[protein] + ADP + H(+). In Arabidopsis thaliana (Mouse-ear cress), this protein is Probable LRR receptor-like serine/threonine-protein kinase At1g14390.